A 371-amino-acid chain; its full sequence is Mannose-1-phosphate guanylyltransferase catalytic subunit beta (371 aa).

The interval Arg-14–Pro-233 is substrate-binding domain. Residue Asp-122 participates in GDP-alpha-D-mannose binding. Asp-122 contributes to the Mg(2+) binding site. Residue Lys-173 is part of the active site. Residue Asp-229 participates in GDP-alpha-D-mannose binding. Mg(2+) is bound at residue Asp-229. A hexapeptide repeat domain region spans residues Tyr-256 to Met-371.

Belongs to the transferase hexapeptide repeat family. In terms of assembly, component of the GMPPA-GMPPB mannose-1-phosphate guanylyltransferase complex composed of 4 Gmppa subunits and 8 Gmppb subunits; the complex is organized into three layers, a central layer made up of 2 Gmppa dimers sandwiched between two layers each made up of 2 Gmppb dimers. Gmppb catalytic activity is reduced when part of the complex and binding of GDP-alpha-D-Mannose by Gmppa induces allosteric feedback inhibition of Gmppb. Mg(2+) is required as a cofactor.

It catalyses the reaction alpha-D-mannose 1-phosphate + GTP + H(+) = GDP-alpha-D-mannose + diphosphate. It participates in nucleotide-sugar biosynthesis; GDP-alpha-D-mannose biosynthesis; GDP-alpha-D-mannose from alpha-D-mannose 1-phosphate (GTP route): step 1/1. Enzyme activity is reduced by incorporation into the GMPPA-GMPPB mannose-1-phosphate guanylyltransferase complex. Allosterically inhibited, when part of the GMPPA-GMPPB complex, by GDP-alpha-D-mannose binding to Gmppa. In terms of biological role, catalytic subunit of the GMPPA-GMPPB mannose-1-phosphate guanylyltransferase complex. Catalyzes the formation of GDP-mannose, an essential precursor of glycan moieties of glycoproteins and glycolipids. Can catalyze the reverse reaction in vitro. Together with GMPPA regulates GDP-alpha-D-mannose levels. This chain is Mannose-1-phosphate guanylyltransferase catalytic subunit beta, found in Drosophila pseudoobscura pseudoobscura (Fruit fly).